Consider the following 161-residue polypeptide: Putative pre-16S rRNA nuclease (161 aa).

The segment at 142–161 is disordered; it reads AGSPPGALVPRNRVDPDRHA.

Belongs to the YqgF nuclease family.

The protein localises to the cytoplasm. Could be a nuclease involved in processing of the 5'-end of pre-16S rRNA. This chain is Putative pre-16S rRNA nuclease, found in Clavibacter sepedonicus (Clavibacter michiganensis subsp. sepedonicus).